The primary structure comprises 433 residues: MASILHYFLALSLSFSFLFFLSDSVPIPQHHTNPTKPINLLVLPVQNDASTGLHWANLQKRTPLMQVPVLVDLNGNHLWVNCEQHYSSKTYQAPFCHSTQCSRANTHQCLSCPAASRPGCHKNTCGLMSTNPITQQTGLGELGQDVLAIHATQGSTQQLGPLVTVPQFLFSCAPSFLLQKGLPRNIQGVAGLGHAPISLPNQLASHFGLQHQFTTCLSRYPTSKGALIFGDAPNNMQQFHNQDIFHDLAFTPLTVTPQGEYNVRVSSIRINQHSVFPPNKISSTIVGSSGGTMISTSTPHMVLQQSLYQAFTQVFAQQLEKQAQVKSVAPFGLCFNSNKINAYPSVDLVMDKPNGPVWRISGEDLMVQAQPGVTCLGVMNGGMQPRAEVTLGTRQLEEKLMVFDLARSRVGFSTSSLHSHGVKCGDLFNFANA.

The signal sequence occupies residues 1–24 (MASILHYFLALSLSFSFLFFLSDS). The 360-residue stretch at 54-413 (HWANLQKRTP…DLARSRVGFS (360 aa)) folds into the Peptidase A1 domain.

The protein belongs to the peptidase A1 family. The mature protein consists of high- and low-kDa subunits linked by disulfide bonds.

In terms of biological role, seed storage protein. Has a protein kinase activity. Binds leginsulin. This is Basic 7S globulin 2 from Glycine max (Soybean).